The chain runs to 305 residues: UDP-3-O-acyl-N-acetylglucosamine deacetylase (305 aa).

Zn(2+) is bound by residues His-79, His-238, and Asp-242. The active-site Proton donor is the His-265.

Belongs to the LpxC family. The cofactor is Zn(2+).

It catalyses the reaction a UDP-3-O-[(3R)-3-hydroxyacyl]-N-acetyl-alpha-D-glucosamine + H2O = a UDP-3-O-[(3R)-3-hydroxyacyl]-alpha-D-glucosamine + acetate. Its pathway is glycolipid biosynthesis; lipid IV(A) biosynthesis; lipid IV(A) from (3R)-3-hydroxytetradecanoyl-[acyl-carrier-protein] and UDP-N-acetyl-alpha-D-glucosamine: step 2/6. Functionally, catalyzes the hydrolysis of UDP-3-O-myristoyl-N-acetylglucosamine to form UDP-3-O-myristoylglucosamine and acetate, the committed step in lipid A biosynthesis. In Salmonella agona (strain SL483), this protein is UDP-3-O-acyl-N-acetylglucosamine deacetylase.